The sequence spans 447 residues: UDP-glycosyltransferase 76E3 (447 aa).

UDP-alpha-D-glucose contacts are provided by residues serine 269, 328–330, 345–353, and 367–370; these read APQ, HCGWNSTLE, and QGEQ.

Belongs to the UDP-glycosyltransferase family.

This chain is UDP-glycosyltransferase 76E3 (UGT76E3), found in Arabidopsis thaliana (Mouse-ear cress).